A 499-amino-acid polypeptide reads, in one-letter code: Ent-kaurenoic acid oxidase 1 (499 aa).

A helical transmembrane segment spans residues 5-25 (AWWAVAAVVAALAVVALDAAV). A heme-binding site is contributed by Cys443.

Belongs to the cytochrome P450 family. It depends on heme as a cofactor.

Its subcellular location is the endoplasmic reticulum membrane. The catalysed reaction is ent-kaur-16-en-19-oate + 3 reduced [NADPH--hemoprotein reductase] + 3 O2 = gibberellin A12 + 3 oxidized [NADPH--hemoprotein reductase] + 4 H2O + 4 H(+). It catalyses the reaction ent-kaur-16-en-19-oate + reduced [NADPH--hemoprotein reductase] + O2 = ent-7alpha-hydroxykaur-16-en-19-oate + oxidized [NADPH--hemoprotein reductase] + H2O + H(+). It carries out the reaction ent-7alpha-hydroxykaur-16-en-19-oate + reduced [NADPH--hemoprotein reductase] + O2 = gibberellin A12 aldehyde + oxidized [NADPH--hemoprotein reductase] + 2 H2O + H(+). The enzyme catalyses gibberellin A12 aldehyde + reduced [NADPH--hemoprotein reductase] + O2 = gibberellin A12 + oxidized [NADPH--hemoprotein reductase] + H2O + 2 H(+). It participates in plant hormone biosynthesis; gibberellin biosynthesis. Its function is as follows. Catalyzes three successive oxidations of ent-kaurenoic acid giving gibberellin 12 (GA12), a key step in gibberellins (GAs) biosynthesis. GAs, which are involved many processes, including stem elongation, play a central role in plant development. This chain is Ent-kaurenoic acid oxidase 1, found in Hordeum vulgare (Barley).